The sequence spans 564 residues: Hsp70-Hsp90 organising protein (564 aa).

TPR repeat units lie at residues 7–40 (AQRL…DPLD), 42–74 (VLYS…KKDW), and 76–108 (KGYI…DPNN). Positions 197 to 239 (EGNDAEERQRQQREEEERRKKKEEEERKKKEEEEMKKQNRTPE) form a coiled coil. The interval 199–247 (NDAEERQRQQREEEERRKKKEEEERKKKEEEEMKKQNRTPEQIQGDEHK) is disordered. The span at 201–233 (AEERQRQQREEEERRKKKEEEERKKKEEEEMKK) shows a compositional bias: basic and acidic residues. TPR repeat units follow at residues 243-276 (GDEH…NPND), 278-310 (MYHY…RYNF), 318-351 (AKLY…DNNR), 378-411 (AEEH…NPND), 413-445 (KLYS…DPTF), and 446-479 (VKAY…DPNN). The STI1 domain occupies 513–552 (DPEIQQIISDPQFQIILQKLNENPNSISEYIKDPKIFNGL).

Monomer. Homodimer. Forms a complex composed of HOP and chaperones HSP70 and HSP90; the interaction is stronger in the absence of ATP. Interacts (via TPR 1, 2, 3, 7, 8 and 9 repeats) with HSP70 (via C-terminus); the interaction is direct and is stronger in the absence of ATP. Interacts (via TPR 4, 5 and 6 repeats) with HSP90 (via C-terminus); the interaction is direct.

The protein resides in the cytoplasm. Functionally, acts as a co-chaperone and mediates the association of the chaperones HSP70 and HSP90 probably facilitating substrate transfer from HSP70 to HSP90. Stimulates HSP70 ATPase activity and, in contrast, inhibits HSP90 ATPase activity. The protein is Hsp70-Hsp90 organising protein of Plasmodium falciparum (isolate 3D7).